A 189-amino-acid chain; its full sequence is NADH dehydrogenase [ubiquinone] 1 beta subcomplex subunit 5, mitochondrial (189 aa).

The transit peptide at 1-46 directs the protein to the mitochondrion; the sequence is MAGMSLLRRVSVTAVAALSGRSLGTRLGFGGFLTRGFPKAVAPVRH. Residues 73–93 form a helical membrane-spanning segment; that stretch reads FYIALTGIPVVIIITLVNVFI.

The protein belongs to the complex I NDUFB5 subunit family. As to quaternary structure, complex I is composed of 45 different subunits.

It localises to the mitochondrion inner membrane. In terms of biological role, accessory subunit of the mitochondrial membrane respiratory chain NADH dehydrogenase (Complex I), that is believed not to be involved in catalysis. Complex I functions in the transfer of electrons from NADH to the respiratory chain. The immediate electron acceptor for the enzyme is believed to be ubiquinone. The polypeptide is NADH dehydrogenase [ubiquinone] 1 beta subcomplex subunit 5, mitochondrial (NDUFB5) (Macaca fascicularis (Crab-eating macaque)).